Reading from the N-terminus, the 491-residue chain is MNFIQDLRLLLKSRYPIILINTREEERLEYIIKNQLFCLDNEKVYCWDFVDGYTSNPNDNGYAKRNPLLALEFIEKLDTPYLNLFILKDFDSFFNDLGLIRKLRNLSQIIKTQSKNIIIVSCKVNIPYTLSDVITIVDLPLPNLSEIKKEITRLSIALGIVLDIELVNNLAKSCQGLSVERIRKTITKTIAQYGQLDSRSLPIIIEEKRQLINQTRLLEFYPYKKATEDIGGLDALKSWLKKRSRSFSKQSFNYGIPTPKGLLLVGIQGTGKSLTAKAIANDWTLPLLRLDIGKLFGGLVGESESRMREMVTIAEGLSPCVLWIDEIDKAFSNLYSQGDSGTSARVFGTFITWLSEKTTPVFVVATANTIQNLPSEMLRKGRFDEIFFLDLPNNEERELIFQIHLARIRPKSWQNYNIKQLSLLCNKFSGAEIEQAIVESMHTAFSEEREFSTEDIKIALEQFIPLAYTDKEQVESLQAWAGNGRARNASL.

Position 266-273 (266-273 (GIQGTGKS)) interacts with ATP.

The protein belongs to the AAA ATPase family. Highly divergent.

It localises to the plastid. Its subcellular location is the chloroplast. This is an uncharacterized protein from Porphyra purpurea (Red seaweed).